The chain runs to 349 residues: Small ribosomal subunit biogenesis GTPase RsgA (349 aa).

Residues 1–11 (MSKKKLSKGQQ) show a composition bias toward basic residues. The disordered stretch occupies residues 1 to 35 (MSKKKLSKGQQRRVSANHQRRLKHADSKVEWDDSQ). Residues 111–272 (YDGLKPIAAN…VIDSPGVREF (162 aa)) form the CP-type G domain. Residues 158–161 (NKID) and 212–220 (GQSGVGKSS) contribute to the GTP site. 4 residues coordinate Zn(2+): cysteine 296, cysteine 301, histidine 303, and cysteine 309.

It belongs to the TRAFAC class YlqF/YawG GTPase family. RsgA subfamily. As to quaternary structure, monomer. Associates with 30S ribosomal subunit, binds 16S rRNA. Requires Zn(2+) as cofactor.

Its subcellular location is the cytoplasm. Its function is as follows. One of several proteins that assist in the late maturation steps of the functional core of the 30S ribosomal subunit. Helps release RbfA from mature subunits. May play a role in the assembly of ribosomal proteins into the subunit. Circularly permuted GTPase that catalyzes slow GTP hydrolysis, GTPase activity is stimulated by the 30S ribosomal subunit. The polypeptide is Small ribosomal subunit biogenesis GTPase RsgA (Dickeya dadantii (strain 3937) (Erwinia chrysanthemi (strain 3937))).